Here is a 396-residue protein sequence, read N- to C-terminus: MAKGKFERTKPHVNVGTIGHVDHGKTTLTAAITTVLTKKFGGEAKAYDQIDAAPEEKARGITINTAHVEYETANRHYAHVDCPGHADYVKNMITGAAQMDGAILVCSAADGPMPQTREHILLARQVGVPYIIVFLNKCDSVDDAELLELVEMEVRELLSKYDFPGDDTPIVKGSAKLALEGDTGELGEVAIMSLADALDTYIPTPERAVDGAFLMPVEDVFSISGRGTVVTGRVERGIVKVGEEIEIVGIKPTVKTTCTGVEMFRKLLDQGQAGDNVGILLRGTKREDVERGQVLAKPGSITPHTHFTAEVYVLSKDEGGRHTPFFNNYRPQFYFRTTDVTGSIELPKDKEMVMPGDNVSITVKLIAPIAMEEGLRFAIREGGRTVGAGVVAKILD.

In terms of domain architecture, tr-type G spans 10–206; sequence KPHVNVGTIG…ALDTYIPTPE (197 aa). Residues 19–26 form a G1 region; the sequence is GHVDHGKT. Position 19–26 (19–26) interacts with GTP; sequence GHVDHGKT. Threonine 26 serves as a coordination point for Mg(2+). The interval 60-64 is G2; the sequence is GITIN. Residues 81–84 are G3; sequence DCPG. GTP contacts are provided by residues 81–85 and 136–139; these read DCPGH and NKCD. A G4 region spans residues 136–139; it reads NKCD. Residues 174-176 are G5; the sequence is SAK.

It belongs to the TRAFAC class translation factor GTPase superfamily. Classic translation factor GTPase family. EF-Tu/EF-1A subfamily. As to quaternary structure, monomer.

It is found in the cytoplasm. The enzyme catalyses GTP + H2O = GDP + phosphate + H(+). Its function is as follows. GTP hydrolase that promotes the GTP-dependent binding of aminoacyl-tRNA to the A-site of ribosomes during protein biosynthesis. The sequence is that of Elongation factor Tu from Burkholderia cepacia (Pseudomonas cepacia).